The following is a 439-amino-acid chain: C4-dicarboxylate transport protein (439 aa).

9 consecutive transmembrane segments (helical) span residues 10 to 30, 45 to 65, 77 to 97, 145 to 165, 185 to 205, 223 to 243, 290 to 310, 332 to 352, and 353 to 373; these read LYVQ…FYPP, LIKM…IAGM, LALL…LVLV, AFAK…GFAL, VLFA…FGAM, LMGT…GTIT, VVGL…AIYL, TLLA…GSGF, and IVLA…LALI. A disordered region spans residues 415–439; it reads LNGQTAEEASAPQALPDRMESRIHH.

It belongs to the dicarboxylate/amino acid:cation symporter (DAACS) (TC 2.A.23) family.

It localises to the cell inner membrane. In terms of biological role, responsible for the transport of dicarboxylates such as succinate, fumarate, and malate from the periplasm across the membrane. The chain is C4-dicarboxylate transport protein from Verminephrobacter eiseniae (strain EF01-2).